An 84-amino-acid polypeptide reads, in one-letter code: Subtilisin-chymotrypsin inhibitor WSCI (84 aa).

Residues 1–12 (MSSVVKKPLGGN) form the signal peptide. The disordered stretch occupies residues 1–28 (MSSVVKKPLGGNTDTGDHHNQKTEWPEL). Residues 15 to 25 (TGDHHNQKTEW) show a composition bias toward basic and acidic residues.

In terms of assembly, monomer.

The protein localises to the secreted. Functionally, inhibits B.lichenoformis subtilisin, B.subtilis subtilisin, bovine pancreatic alpha-chymotrypsin and porcine alpha-chymotrypsin with Ki of 3.92 nM, 5.70 nM, 7.24 nM and 9.35 nM respectively. B.lichenoformis subtilisin is inhibited with a molar ratio of 1:0.87. Also inhibits chymotrypsin-like activities from the digestive tracts of the insect larvae T.molitor, P.interpunctella and H.armigera. Does not inhibit bovine pancreatic trypsin, porcine pancreatic elastase, or human leukocyte elastase. The sequence is that of Subtilisin-chymotrypsin inhibitor WSCI from Triticum aestivum (Wheat).